We begin with the raw amino-acid sequence, 685 residues long: Protein argonaute (685 aa).

Positions Met-1–Asp-99 are N-terminal domain. Positions Pro-100–Glu-176 are linker L1. Positions Pro-169–Leu-265 constitute a PAZ domain. Residues Glu-272 to Gly-337 are linker L2. The interval Phe-338 to Val-463 is mid domain. The interval Ala-464–Val-685 is PIWI domain. Catalysis depends on residues Asp-478, Glu-512, Asp-546, and Asp-660. Asp-478 lines the Mn(2+) pocket. One can recognise a Piwi domain in the interval Glu-507–Ile-671. The Mn(2+) site is built by Asp-546, Asp-660, and Val-685.

This sequence belongs to the argonaute family. Long pAgo subfamily. As to quaternary structure, coimmunoprecipitates with a number of proteins involved in DNA replication or recombination including RepA (initiates replication), AddA/B (TT_C0638 and TT_C0639), ArgR, GyrA/B, HU (TT_C0984), PriA, Rad52 (TT_C1923), RecJ, SSB, TopA and UvrB. Most proteins remain associated with TtAgo after DNase treatment and associate with catalytically inactive protein. It depends on Mn(2+) as a cofactor.

A DNA-guided ssDNA endonuclease. Uses short ssDNA sequences as guides (gDNA, also called small interfering DNA, siDNA) to bind complementary DNA target strands, resulting in cleavage of the target DNA (tDNA). The cleavage site is 10 nucleotides (nt) downstream of the target residue base-paired with the 5'-end of the gDNA. Plays a role in completion of DNA replication, participates in decatenating replicated DNA and plasmid. In situ purifies with 5'-phosphorylated long DNA (about 1160 nt, maps to the whole chromosome and plasmid), 25-35 nt RNAs that map to the whole chromosome and 15-18 nt DNA that maps to the replication terminus region (ter) on the chromosome and plasmid. Most short DNA starts with dC. Has been shown to have guide sequence-independent dsDNase activity called 'chopping', which requires unstable DNA (high AT-content, multiple mismatches or low salt conditions), and could be used to generate gDNA. Preferentially binds tDNA with dC at its 3'-terminus. Has also been shown to have no detectable guide sequence-independent dsDNase activity. The latter study proposes TtAgo may acquire gDNA from nicked dsDNA, by binding to 5'-phosphorylated-dC nicks, then cleaving 10 nt away on the opposite strand; subsequently an exonuclease (maybe AddA-AddB helicase/nuclease) trims the ends to generate the gDNA. In terms of biological role, involved in defense against invading mobile genetic elements. TtAgo interferes with plasmid DNA, stimulates expression of specific endogenous genes, including various CRISPR loci and at least part of the CRISPR adaptation machinery, but only when exogenous plasmid DNA is present. Upon purification from E.coli associates with gDNA 13-25 nt long with 5'-phosphorylated ends and with 10-150 nt RNA with 5'-OH. DNA corresponds to the expression plasmid rather than chromosomal DNA; 89% of gDNA starts with dC and 72% has dA in the second position. Endonucleolytically cleaves tDNA with 5'-phosphorylated gDNA but not 5'-phosphorylated gRNA; the active site is involved in processing or binding of ssDNA. Nicks or linearizes supercoiled plasmid target when it has the appropriate gDNA sequences, does not cleave linear tDNA. Positions 4 to 16 of the tDNA need to be base paired to the gDNA for efficient tDNA cleavage. Although the system can support single nucleotide insertions in either the gDNA or tDNA, in all cases cleavage activity is reduced, with a wide range of sequence- and position-specific effects. Functionally, first characterized as a DNA-guided RNA endonuclease. Uses gDNA to bind complementary RNA target strands, resulting in cleavage of the target RNA. The cleavage site is 10 nucleotides (nt) downstream of the target residue base-paired with the 5'-end of the guide DNA. The chain is Protein argonaute from Thermus thermophilus (strain ATCC BAA-163 / DSM 7039 / HB27).